The primary structure comprises 92 residues: Small ribosomal subunit protein uS19 (92 aa).

The protein belongs to the universal ribosomal protein uS19 family.

Functionally, protein S19 forms a complex with S13 that binds strongly to the 16S ribosomal RNA. This is Small ribosomal subunit protein uS19 from Bacillus thuringiensis subsp. konkukian (strain 97-27).